A 220-amino-acid chain; its full sequence is Flavin-dependent thymidylate synthase (220 aa).

Residues 1–208 (MKIDILDKGF…PWTFEAFLKY (208 aa)) enclose the ThyX domain. Residues T55, 78 to 80 (RHR), and E86 contribute to the FAD site. Residues 75–78 (QWFR), 86–90 (ELSGR), and R147 contribute to the dUMP site. Residues 78–88 (RHRIASYNELS) carry the ThyX motif motif. FAD-binding positions include 163 to 165 (NAR) and N169. R174 is a binding site for dUMP. R174 (involved in ionization of N3 of dUMP, leading to its activation) is an active-site residue.

Belongs to the thymidylate synthase ThyX family. Homotetramer. Requires FAD as cofactor.

It carries out the reaction dUMP + (6R)-5,10-methylene-5,6,7,8-tetrahydrofolate + NADPH + H(+) = dTMP + (6S)-5,6,7,8-tetrahydrofolate + NADP(+). Its pathway is pyrimidine metabolism; dTTP biosynthesis. Catalyzes the reductive methylation of 2'-deoxyuridine-5'-monophosphate (dUMP) to 2'-deoxythymidine-5'-monophosphate (dTMP) while utilizing 5,10-methylenetetrahydrofolate (mTHF) as the methyl donor, and NADPH and FADH(2) as the reductant. This chain is Flavin-dependent thymidylate synthase, found in Thermotoga petrophila (strain ATCC BAA-488 / DSM 13995 / JCM 10881 / RKU-1).